A 594-amino-acid polypeptide reads, in one-letter code: Gamma-terpinene synthase, chloroplastic (594 aa).

The transit peptide at 1-44 directs the protein to the chloroplast; sequence MATLSMQVSILSKEVKNVNNIGMRASKPMVARRVSTTRLRPICS. Mn(2+)-binding residues include Asp347 and Asp351. The short motif at 347-351 is the DDXXD motif element; the sequence is DDVYD. 2 homodimerization regions span residues 353-359 and 425-462; these read YGTLDEL and EAKW…FTLP. Mn(2+)-binding residues include Asp491 and Glu499.

This sequence belongs to the terpene synthase family. In terms of assembly, homodimer. Requires Mn(2+) as cofactor. Mg(2+) is required as a cofactor. In terms of tissue distribution, expressed in peltate glandular trichomes.

It localises to the plastid. It is found in the chloroplast. It catalyses the reaction (2E)-geranyl diphosphate = gamma-terpinene + diphosphate. The enzyme catalyses (2E)-geranyl diphosphate = alpha-terpinene + diphosphate. It functions in the pathway secondary metabolite biosynthesis; terpenoid biosynthesis. In terms of biological role, involved in the biosynthesis of phenolic monoterpenes natural products thymol and carvacrol which have a broad range of biological activities acting as antimicrobial compounds, insecticides, antioxidants and pharmaceutical agents. Monoterpene synthase which catalyzes the conversion of geranyl diphosphate (GPP) to gamma-terpinene and the minor products alpha-thujene, alpha-terpinene, myrcene, sabinene, (+)-R-limonene, alpha-pinene and alpha-phellandrene. The chain is Gamma-terpinene synthase, chloroplastic from Origanum vulgare (Wild marjoram).